The primary structure comprises 450 residues: MRKDWCEARKNDPTPTQMYYAKNGVITPEMEYVAKVEMLKPEYIRQLVAEGKLIIPANINHTNQIPMAIGRAVKCKINANIGSSALASDINEEIEKLKVCLKYGADTVMDLSTGGDLDEIRRAIIANSTVPIGTVPIYQIIHDIKDLDNLTPQIMLECIEKQAKQGVSYFTIHAGFLLKFMPLVAKRKMGIVSRGGSLMASWMMKHHKENPFYEAFDEICDICAKYDASLSLGDSLRPGCLHDASDEAQMSELAVLGELTKRAWEKNVQVMVEGPGHVPFNQIEFNMKEEKRLCHDAPFYILGPLPTDIGAGYDHITSAIGGTMAAFHGASMLCYVTPKEHLGLPNAKDVRDGIISHKIAAHAADIALGRVGAIERDHAMSDARYKFDWNKQFELALDPDKARELHDESLPQDVFKEAEFCSMCGPKFCAYKISQEIAKIECSDYPKEKK.

Residues Asn-80, Met-109, Tyr-138, His-173, 193-195, 234-237, and Glu-273 contribute to the substrate site; these read SRG and DSLR. His-277 contacts Zn(2+). Residue Tyr-300 participates in substrate binding. His-341 provides a ligand contact to Zn(2+). [4Fe-4S] cluster-binding residues include Cys-421, Cys-424, and Cys-429.

Belongs to the ThiC family. In terms of assembly, homodimer. It depends on [4Fe-4S] cluster as a cofactor.

The enzyme catalyses 5-amino-1-(5-phospho-beta-D-ribosyl)imidazole + S-adenosyl-L-methionine = 4-amino-2-methyl-5-(phosphooxymethyl)pyrimidine + CO + 5'-deoxyadenosine + formate + L-methionine + 3 H(+). It functions in the pathway cofactor biosynthesis; thiamine diphosphate biosynthesis. Functionally, catalyzes the synthesis of the hydroxymethylpyrimidine phosphate (HMP-P) moiety of thiamine from aminoimidazole ribotide (AIR) in a radical S-adenosyl-L-methionine (SAM)-dependent reaction. This is Phosphomethylpyrimidine synthase from Campylobacter fetus subsp. fetus (strain 82-40).